The primary structure comprises 219 residues: Orotate phosphoribosyltransferase (219 aa).

Residue K26 coordinates 5-phospho-alpha-D-ribose 1-diphosphate. 34–35 (FF) provides a ligand contact to orotate. 5-phospho-alpha-D-ribose 1-diphosphate is bound by residues 72–73 (YK), R102, K103, K106, H108, and 128–136 (DDVITAGTA). Positions 132 and 160 each coordinate orotate.

This sequence belongs to the purine/pyrimidine phosphoribosyltransferase family. PyrE subfamily. In terms of assembly, homodimer.

The catalysed reaction is orotidine 5'-phosphate + diphosphate = orotate + 5-phospho-alpha-D-ribose 1-diphosphate. The protein operates within pyrimidine metabolism; UMP biosynthesis via de novo pathway; UMP from orotate: step 1/2. Catalyzes the transfer of a ribosyl phosphate group from 5-phosphoribose 1-diphosphate to orotate, leading to the formation of orotidine monophosphate (OMP). In Yarrowia lipolytica (strain CLIB 122 / E 150) (Yeast), this protein is Orotate phosphoribosyltransferase (URA5).